The sequence spans 380 residues: Pregnancy-associated glycoprotein 6 (380 aa).

Residues 1 to 15 (MKWLVLLGLVSISEC) form the signal peptide. Positions 16 to 53 (IVKIPLRRVKTMRKTLSEKNMLNNFLKEHAYRLSQISF) are cleaved as a propeptide — activation peptide. Residues Asn-57 and Asn-74 are each glycosylated (N-linked (GlcNAc...) asparagine). Residues 71–377 (YLGNITIGTP…DRGHDRIGLA (307 aa)) enclose the Peptidase A1 domain. The active site involves Asp-89. Cys-102 and Cys-107 form a disulfide bridge. Asn-125 carries N-linked (GlcNAc...) asparagine glycosylation. Cys-261 and Cys-265 form a disulfide bridge. Residue Asp-270 is part of the active site. Cys-303 and Cys-337 are oxidised to a cystine.

The protein belongs to the peptidase A1 family. As to expression, trophoblast and placental tissue. Produced specifically in the invasive binucleate cells of the placenta.

The protein localises to the secreted. Its subcellular location is the extracellular space. The polypeptide is Pregnancy-associated glycoprotein 6 (Ovis aries (Sheep)).